The primary structure comprises 137 residues: uncharacterized protein (137 aa).

A disordered region spans residues 1–32 (MRDHLPPGLPPDPFADDPCDPSAALDAVEPGQ).

To M.tuberculosis Rv3412.

This is an uncharacterized protein from Mycobacterium leprae (strain TN).